We begin with the raw amino-acid sequence, 277 residues long: Thymidylate synthase (277 aa).

R21 contacts dUMP. H51 provides a ligand contact to (6R)-5,10-methylene-5,6,7,8-tetrahydrofolate. 126–127 (RR) contacts dUMP. The active-site Nucleophile is C159. DUMP-binding positions include 179-182 (RSAD), N190, and 220-222 (HLY). (6R)-5,10-methylene-5,6,7,8-tetrahydrofolate is bound at residue D182. Residue S276 participates in (6R)-5,10-methylene-5,6,7,8-tetrahydrofolate binding.

The protein belongs to the thymidylate synthase family. Bacterial-type ThyA subfamily. Homodimer.

It localises to the cytoplasm. The enzyme catalyses dUMP + (6R)-5,10-methylene-5,6,7,8-tetrahydrofolate = 7,8-dihydrofolate + dTMP. It participates in pyrimidine metabolism; dTTP biosynthesis. In terms of biological role, catalyzes the reductive methylation of 2'-deoxyuridine-5'-monophosphate (dUMP) to 2'-deoxythymidine-5'-monophosphate (dTMP) while utilizing 5,10-methylenetetrahydrofolate (mTHF) as the methyl donor and reductant in the reaction, yielding dihydrofolate (DHF) as a by-product. This enzymatic reaction provides an intracellular de novo source of dTMP, an essential precursor for DNA biosynthesis. The polypeptide is Thymidylate synthase (Teredinibacter turnerae (strain ATCC 39867 / T7901)).